The following is a 123-amino-acid chain: Large ribosomal subunit protein bL12 (123 aa).

This sequence belongs to the bacterial ribosomal protein bL12 family. Homodimer. Part of the ribosomal stalk of the 50S ribosomal subunit. Forms a multimeric L10(L12)X complex, where L10 forms an elongated spine to which 2 to 4 L12 dimers bind in a sequential fashion. Binds GTP-bound translation factors.

Functionally, forms part of the ribosomal stalk which helps the ribosome interact with GTP-bound translation factors. Is thus essential for accurate translation. In Chromobacterium violaceum (strain ATCC 12472 / DSM 30191 / JCM 1249 / CCUG 213 / NBRC 12614 / NCIMB 9131 / NCTC 9757 / MK), this protein is Large ribosomal subunit protein bL12.